The following is a 452-amino-acid chain: MPSVLENILKDKLLEVSDLKKNHALPININPSDRDFKKALLEKKTSFILECKKASPSKGLIRKDFDLLKITKTYEKFASCISVLADSKYFLGSYENIKIVSQHSTKPILCKDFIIDAFQIKLARMMGANAVLLMLSVLDDKNYLELFNLAKSLNMSVLTEVSNQQEIEHLLKLQYDIIGINNRDLHTLKTDINHTLKLRPLLPKDALIISESGIYSHAQIKALAPYVNGFLVGSSLMKEKDLKKACIKLILGENKVCGLTRIKDAKAVYKNHFIYGGLIFEKSSPRYIKPKEALKITKAVKKLDFVGVFVKDSIKKIQKIVKKLDLKAVQLYGYSQKEIAQLKKALPKTCAIWQVISVMSAKDLVPKTKEASLILYDTKGDKMGGNGVSFDWEILENVKTPFMLAGGLNLDNIQKALKVEALGLDFNSGLEISPGIKNKDKIKRLARILREY.

The segment at 1–253 (MPSVLENILK…KACIKLILGE (253 aa)) is indole-3-glycerol phosphate synthase. An N-(5'-phosphoribosyl)anthranilate isomerase region spans residues 254–448 (NKVCGLTRIK…KDKIKRLARI (195 aa)).

In the N-terminal section; belongs to the TrpC family. It in the C-terminal section; belongs to the TrpF family.

The enzyme catalyses N-(5-phospho-beta-D-ribosyl)anthranilate = 1-(2-carboxyphenylamino)-1-deoxy-D-ribulose 5-phosphate. It catalyses the reaction 1-(2-carboxyphenylamino)-1-deoxy-D-ribulose 5-phosphate + H(+) = (1S,2R)-1-C-(indol-3-yl)glycerol 3-phosphate + CO2 + H2O. It participates in amino-acid biosynthesis; L-tryptophan biosynthesis; L-tryptophan from chorismate: step 3/5. The protein operates within amino-acid biosynthesis; L-tryptophan biosynthesis; L-tryptophan from chorismate: step 4/5. In terms of biological role, bifunctional enzyme that catalyzes two sequential steps of tryptophan biosynthetic pathway. The first reaction is catalyzed by the isomerase, coded by the TrpF domain; the second reaction is catalyzed by the synthase, coded by the TrpC domain. The protein is Tryptophan biosynthesis protein TrpCF (trpC) of Helicobacter pylori (strain ATCC 700392 / 26695) (Campylobacter pylori).